The primary structure comprises 883 residues: Mitogen-activated protein kinase kinase kinase YODA (883 aa).

Disordered stretches follow at residues 28 to 193, 303 to 364, and 376 to 396; these read GFAS…AEMF, CSPE…PPLL, and SAAT…TVSP. The segment covering 57 to 72 has biased composition (low complexity); the sequence is SRLPSRSPSPSTRVSR. The span at 94-105 shows a compositional bias: polar residues; it reads VTSTDSGMNGSQ. The segment covering 143 to 165 has biased composition (low complexity); the sequence is SVSSGSSVGDIPSDSLLSPLASD. 2 stretches are compositionally biased toward polar residues: residues 167–189 and 314–328; these read ENGN…NKNS and RMTS…QSGA. The 257-residue stretch at 400–656 folds into the Protein kinase domain; it reads WKKGRLLGMG…AAQLLDHAFV (257 aa). ATP-binding positions include 406–414 and K429; that span reads LGMGSFGHV. D525 acts as the Proton acceptor in catalysis. Disordered regions lie at residues 712-773 and 787-838; these read GSGF…GAIP and EGIG…IQPG. The segment covering 733-756 has biased composition (low complexity); the sequence is SPIFHSHSPHISGRRSPSPISSPH.

The protein belongs to the protein kinase superfamily. STE Ser/Thr protein kinase family. MAP kinase kinase kinase subfamily. Interacts with ASK7. Interacts with BSK12/SSP. Binds to BASL and MPK6. As to expression, expressed in roots, leaves, guard cells, stems, flowers and siliques.

It is found in the cytoplasm. It localises to the cell cortex. Its subcellular location is the cell membrane. It catalyses the reaction L-seryl-[protein] + ATP = O-phospho-L-seryl-[protein] + ADP + H(+). The catalysed reaction is L-threonyl-[protein] + ATP = O-phospho-L-threonyl-[protein] + ADP + H(+). Contains an N-terminal autoinhibitory domain. Functionally, functions in a MAP kinase cascade that acts as a molecular switch to regulate the first cell fate decisions in the zygote and the early embryo. Promotes elongation of the zygote and development of its basal daughter cell into the extra-embryonic suspensor. In stomatal development, acts downstream of the LRR receptor TMM, but upstream of the MKK4/MKK5-MPK3/MPK6 module to regulate stomatal cell fate before the guard mother cell (GMC) is specified. Plays a central role in both guard cell identity and pattern formation. This MAPK cascade also functions downstream of the ER receptor in regulating coordinated local cell proliferation, which shapes the morphology of plant organs. Upon brassinosteroid signaling, is inhibited by phosphorylation of its auto-inhibitory N-terminal domain by the GSK3-like kinase ASK7. This Arabidopsis thaliana (Mouse-ear cress) protein is Mitogen-activated protein kinase kinase kinase YODA.